Reading from the N-terminus, the 841-residue chain is Transcription regulator protein BACH2 (841 aa).

Residues 37 to 103 (CDVTLIVERK…AYTAKLLLSR (67 aa)) enclose the BTB domain. Disordered regions lie at residues 153 to 173 (HEDC…TMDS), 204 to 226 (EALL…DALT), and 246 to 329 (SSHS…AACL). Positions 160-172 (AGEEEDEEEETMD) are enriched in acidic residues. Basic and acidic residues-rich tracts occupy residues 214 to 224 (TDTKESSEKDA) and 298 to 313 (PDAK…DRKQ). S315 carries the phosphoserine modification. Glycyl lysine isopeptide (Lys-Gly) (interchain with G-Cter in SUMO2) cross-links involve residues K382 and K421. S521 carries the phosphoserine; by RPS6KB1 modification. Residues 583-610 (QSYGTNSSDESGSFSEADSESCPVQDRG) form a disordered region. A compositionally biased stretch (polar residues) spans 584 to 598 (SYGTNSSDESGSFSE). One can recognise a bZIP domain in the interval 646 to 709 (FIHDVRRRSK…GELLDNFSCL (64 aa)). The basic motif stretch occupies residues 651 to 667 (RRRSKNRIAAQRCRKRK). Positions 671–678 (IQNLECEI) are leucine-zipper. Residues 777–816 (PGPPWAPSNTSENCTSGRRLEGTDPGTFSERGPPLEPRSQ) form a disordered region. The short motif at 821-841 (DFCQEMTDKCTTDEQPRKDYT) is the Nuclear export signal element.

The protein belongs to the bZIP family. CNC subfamily. In terms of assembly, homodimer; disulfide-linked. Heterodimer of BACH2 and Maf-related transcription factors. In terms of processing, phosphorylation at Ser-521 downstream of the PI-3K pathway promotes nuclear export. Post-translationally, the reversible disulfide bond may provide a mechanism to regulate the activity in oxidative stress responses. As to expression, B-cell specific.

The protein localises to the cytoplasm. The protein resides in the nucleus. Functionally, transcriptional regulator that acts as a repressor or activator. Binds to Maf recognition elements (MARE). Plays an important role in coordinating transcription activation and repression by MAFK. Induces apoptosis in response to oxidative stress through repression of the antiapoptotic factor HMOX1. Positively regulates the nuclear import of actin. Is a key regulator of adaptive immunity, crucial for the maintenance of regulatory T-cell function and B-cell maturation. The protein is Transcription regulator protein BACH2 (BACH2) of Homo sapiens (Human).